The following is a 63-amino-acid chain: Large ribosomal subunit protein bL28 (63 aa).

The interval 1–21 is disordered; that stretch reads MSRRDDLTGKGPMFGNNRSHA.

Belongs to the bacterial ribosomal protein bL28 family.

In Mycoplasmopsis pulmonis (strain UAB CTIP) (Mycoplasma pulmonis), this protein is Large ribosomal subunit protein bL28.